A 388-amino-acid polypeptide reads, in one-letter code: Succinate--CoA ligase [ADP-forming] subunit beta (388 aa).

The ATP-grasp domain maps to 9 to 236; it reads KKLFAEHGVP…VAAVDPLEQK (228 aa). ATP contacts are provided by residues lysine 45, 52–54, glutamate 91, serine 94, and glutamate 99; that span reads GRG. Mg(2+) is bound by residues asparagine 191 and aspartate 205. Residues asparagine 256 and 318–320 each bind substrate; that span reads GIT.

It belongs to the succinate/malate CoA ligase beta subunit family. As to quaternary structure, heterotetramer of two alpha and two beta subunits. Mg(2+) is required as a cofactor.

The enzyme catalyses succinate + ATP + CoA = succinyl-CoA + ADP + phosphate. It carries out the reaction GTP + succinate + CoA = succinyl-CoA + GDP + phosphate. It participates in carbohydrate metabolism; tricarboxylic acid cycle; succinate from succinyl-CoA (ligase route): step 1/1. Functionally, succinyl-CoA synthetase functions in the citric acid cycle (TCA), coupling the hydrolysis of succinyl-CoA to the synthesis of either ATP or GTP and thus represents the only step of substrate-level phosphorylation in the TCA. The beta subunit provides nucleotide specificity of the enzyme and binds the substrate succinate, while the binding sites for coenzyme A and phosphate are found in the alpha subunit. The polypeptide is Succinate--CoA ligase [ADP-forming] subunit beta (Parafrankia sp. (strain EAN1pec)).